A 112-amino-acid chain; its full sequence is Large ribosomal subunit protein bL21 (112 aa).

This sequence belongs to the bacterial ribosomal protein bL21 family. In terms of assembly, part of the 50S ribosomal subunit. Contacts protein L20.

This protein binds to 23S rRNA in the presence of protein L20. The polypeptide is Large ribosomal subunit protein bL21 (Buchnera aphidicola subsp. Baizongia pistaciae (strain Bp)).